We begin with the raw amino-acid sequence, 362 residues long: Putative F-box/kelch-repeat protein At3g20710 (362 aa).

One can recognise an F-box domain in the interval 1-50 (MMMSNLPKDLVEEILSRVPFKYLRAIRSTCKNWYDLSKNRSFANKNIDKA). Kelch repeat units follow at residues 150–201 (YDKS…VSLN) and 293–341 (IYCR…YFKS).

In Arabidopsis thaliana (Mouse-ear cress), this protein is Putative F-box/kelch-repeat protein At3g20710.